A 373-amino-acid chain; its full sequence is Flagellar P-ring protein (373 aa).

An N-terminal signal peptide occupies residues 1–30 (MTNRWSFDVNKNLVTVLFTWLCLSISTAHA).

Belongs to the FlgI family. The basal body constitutes a major portion of the flagellar organelle and consists of four rings (L,P,S, and M) mounted on a central rod.

The protein localises to the periplasm. The protein resides in the bacterial flagellum basal body. Assembles around the rod to form the L-ring and probably protects the motor/basal body from shearing forces during rotation. In Aliivibrio fischeri (strain ATCC 700601 / ES114) (Vibrio fischeri), this protein is Flagellar P-ring protein.